We begin with the raw amino-acid sequence, 358 residues long: tRNA (guanine-N(7)-)-methyltransferase (358 aa).

Residues 1–29 form a disordered region; it reads MTPPPPKRQKRDEYRKATAEATSQSGASD. Residues Gly-99 and 122–123 contribute to the S-adenosyl-L-methionine site; that span reads EI. Low complexity predominate over residues 151-186; that stretch reads TATAASETPSQQQAQIDGKQANANAAADAASPAPST. Residues 151–194 are disordered; sequence TATAASETPSQQQAQIDGKQANANAAADAASPAPSTDTEHMPTT. S-adenosyl-L-methionine contacts are provided by residues 209–210 and Cys-229; that span reads NT. Residue Asp-232 is part of the active site. Residue 330–332 coordinates S-adenosyl-L-methionine; the sequence is TEE.

Belongs to the class I-like SAM-binding methyltransferase superfamily. TrmB family. In terms of assembly, forms a complex with trm82.

It localises to the nucleus. The catalysed reaction is guanosine(46) in tRNA + S-adenosyl-L-methionine = N(7)-methylguanosine(46) in tRNA + S-adenosyl-L-homocysteine. It functions in the pathway tRNA modification; N(7)-methylguanine-tRNA biosynthesis. Functionally, catalyzes the formation of N(7)-methylguanine at position 46 (m7G46) in tRNA. The protein is tRNA (guanine-N(7)-)-methyltransferase (trm8) of Aspergillus fumigatus (strain CBS 144.89 / FGSC A1163 / CEA10) (Neosartorya fumigata).